The chain runs to 92 residues: Nodulation protein F (92 aa).

The Carrier domain occupies 4 to 88 (QLTLEIISAI…DVVEAVRGLL (85 aa)). At Ser-45 the chain carries O-(pantetheine 4'-phosphoryl)serine.

In terms of processing, 4'-phosphopantetheine is transferred from CoA to a specific serine of apo-NodF.

In terms of biological role, proposed to synthesize nod factor fatty acyl chain. Involved in trans-2,trans-4,trans-6,cis-11-octadecatetraenoic acid biosynthesis. The polypeptide is Nodulation protein F (nodF) (Rhizobium leguminosarum bv. viciae).